The following is a 370-amino-acid chain: Small ribosomal subunit biogenesis GTPase RsgA (370 aa).

The region spanning 97–255 (QTQLDRPPIA…LADTPGFNQP (159 aa)) is the CP-type G domain. GTP contacts are provided by residues 146 to 149 (NKSD) and 197 to 205 (GPSGVGKSS). Positions 280, 285, 287, and 293 each coordinate Zn(2+). Positions 328–370 (TLKLKTKGKGQSQYEPKLESKKYRRTSRRTQVQGLQDLYQEEE) are disordered.

This sequence belongs to the TRAFAC class YlqF/YawG GTPase family. RsgA subfamily. In terms of assembly, monomer. Associates with 30S ribosomal subunit, binds 16S rRNA. It depends on Zn(2+) as a cofactor.

It localises to the cytoplasm. In terms of biological role, one of several proteins that assist in the late maturation steps of the functional core of the 30S ribosomal subunit. Helps release RbfA from mature subunits. May play a role in the assembly of ribosomal proteins into the subunit. Circularly permuted GTPase that catalyzes slow GTP hydrolysis, GTPase activity is stimulated by the 30S ribosomal subunit. The protein is Small ribosomal subunit biogenesis GTPase RsgA of Trichormus variabilis (strain ATCC 29413 / PCC 7937) (Anabaena variabilis).